Reading from the N-terminus, the 397-residue chain is Tryptophan synthase beta chain (397 aa).

K86 bears the N6-(pyridoxal phosphate)lysine mark.

It belongs to the TrpB family. Tetramer of two alpha and two beta chains. Requires pyridoxal 5'-phosphate as cofactor.

It catalyses the reaction (1S,2R)-1-C-(indol-3-yl)glycerol 3-phosphate + L-serine = D-glyceraldehyde 3-phosphate + L-tryptophan + H2O. Its pathway is amino-acid biosynthesis; L-tryptophan biosynthesis; L-tryptophan from chorismate: step 5/5. In terms of biological role, the beta subunit is responsible for the synthesis of L-tryptophan from indole and L-serine. The sequence is that of Tryptophan synthase beta chain from Aeromonas salmonicida (strain A449).